Here is a 90-residue protein sequence, read N- to C-terminus: Darcynin 1 (90 aa).

Belongs to the darcynin family.

The sequence is that of Darcynin 1 from Acinetobacter baumannii (strain ATCC 17978 / DSM 105126 / CIP 53.77 / LMG 1025 / NCDC KC755 / 5377).